The primary structure comprises 110 residues: Nucleoid-associated protein CbuK_1603 (110 aa).

Belongs to the YbaB/EbfC family. Homodimer.

It localises to the cytoplasm. The protein resides in the nucleoid. Its function is as follows. Binds to DNA and alters its conformation. May be involved in regulation of gene expression, nucleoid organization and DNA protection. In Coxiella burnetii (strain CbuK_Q154) (Coxiella burnetii (strain Q154)), this protein is Nucleoid-associated protein CbuK_1603.